The sequence spans 317 residues: Fe-S cluster assembly protein dre2 (317 aa).

Positions 22–152 (PVQAKRTLLL…KPNFEPSAAV (131 aa)) are N-terminal SAM-like domain. The tract at residues 153 to 209 (PLKFGLKKKNKPTPTAVPSIPTGFAAPMGIDSPVTNHDRDEDDELINEDTLLSEEDL) is linker. [2Fe-2S] cluster-binding residues include cysteine 219, cysteine 230, cysteine 233, and cysteine 235. Positions 219–235 (CQPKTGRRRRACKDCTC) are fe-S binding site A. 4 residues coordinate [4Fe-4S] cluster: cysteine 280, cysteine 283, cysteine 291, and cysteine 294. 2 short sequence motifs (cx2C motif) span residues 280 to 283 (CGSC) and 291 to 294 (CDGC). The interval 280 to 294 (CGSCALGDAFRCDGC) is fe-S binding site B.

The protein belongs to the anamorsin family. In terms of assembly, monomer. Interacts with tah18. Interacts with mia40. [2Fe-2S] cluster serves as cofactor. [4Fe-4S] cluster is required as a cofactor.

It is found in the cytoplasm. The protein resides in the mitochondrion intermembrane space. Functionally, component of the cytosolic iron-sulfur (Fe-S) protein assembly (CIA) machinery required for the maturation of extramitochondrial Fe-S proteins. Part of an electron transfer chain functioning in an early step of cytosolic Fe-S biogenesis, facilitating the de novo assembly of a [4Fe-4S] cluster on the scaffold complex cfd1-nbp35. Electrons are transferred to dre2 from NADPH via the FAD- and FMN-containing protein tah18. Tah18-dre2 are also required for the assembly of the diferric tyrosyl radical cofactor of ribonucleotide reductase (RNR), probably by providing electrons for reduction during radical cofactor maturation in the catalytic small subunit rnr2. This is Fe-S cluster assembly protein dre2 from Penicillium rubens (strain ATCC 28089 / DSM 1075 / NRRL 1951 / Wisconsin 54-1255) (Penicillium chrysogenum).